The sequence spans 404 residues: Rhomboid-related protein 3 (404 aa).

2 EF-hand domains span residues 34–69 (APED…HSSK) and 70–105 (LDPH…KRSN). Transmembrane regions (helical) follow at residues 164–184 (WFMI…GVLL), 227–247 (LGLN…VHGA), 250–270 (IGLV…VADM), 274–294 (VVGS…NIVM), 305–324 (LLRM…RAVW), 338–358 (PSFV…VVVL), and 371–391 (WWIF…WNIF). Catalysis depends on Ser-278, which acts as the Nucleophile. Residue His-343 is part of the active site.

It belongs to the peptidase S54 family.

The protein resides in the membrane. It catalyses the reaction Cleaves type-1 transmembrane domains using a catalytic dyad composed of serine and histidine that are contributed by different transmembrane domains.. In terms of biological role, may be involved in regulated intramembrane proteolysis and the subsequent release of functional polypeptides from their membrane anchors. The sequence is that of Rhomboid-related protein 3 (Rhbdl3) from Mus musculus (Mouse).